Here is a 404-residue protein sequence, read N- to C-terminus: Argininosuccinate synthase (404 aa).

Residues 9 to 17 (AYSGGLDTS) and Ala36 each bind ATP. Residue Tyr87 coordinates L-citrulline. Gly117 contacts ATP. Residues Thr119, Asn123, and Asp124 each coordinate L-aspartate. Position 123 (Asn123) interacts with L-citrulline. Residues Arg127, Ser176, and Glu261 each contribute to the L-citrulline site.

The protein belongs to the argininosuccinate synthase family. Type 1 subfamily. As to quaternary structure, homotetramer.

It localises to the cytoplasm. It carries out the reaction L-citrulline + L-aspartate + ATP = 2-(N(omega)-L-arginino)succinate + AMP + diphosphate + H(+). It participates in amino-acid biosynthesis; L-arginine biosynthesis; L-arginine from L-ornithine and carbamoyl phosphate: step 2/3. This is Argininosuccinate synthase from Burkholderia pseudomallei (strain K96243).